A 1686-amino-acid chain; its full sequence is Thrombospondin type-1 domain-containing protein 7A (1686 aa).

The N-terminal stretch at Met1–Thr36 is a signal peptide. Over Gln37 to Trp1635 the chain is Extracellular. TSP type-1 domains follow at residues Pro44–Asp103, Glu107–Pro181, and Asp183–Glu236. A glycan (N-linked (GlcNAc...) asparagine) is linked at Asn223. The interval Ile257 to Thr321 is disordered. Composition is skewed to basic and acidic residues over residues Gln259–Glu272 and Glu294–Thr321. TSP type-1 domains are found at residues Asp385–Gly441, Val448–Pro535, Glu537–Tyr596, Asp656–Thr717, Val718–Lys797, Asp799–Pro859, Gly860–Gln932, Asp934–Pro985, Lys988–Pro1061, Asp1063–Ser1123, Gln1124–Pro1191, Asp1193–Phe1247, His1248–Pro1311, Asn1313–Phe1368, Ser1369–Pro1439, and Glu1441–Tyr1502. Intrachain disulfides connect Cys460–Cys530, Cys480–Cys534, and Cys491–Cys519. An N-linked (GlcNAc...) asparagine glycan is attached at Asn475. A glycan (N-linked (GlcNAc...) asparagine) is linked at Asn525. Disulfide bonds link Cys657–Cys699 and Cys668–Cys672. N-linked (GlcNAc...) asparagine glycosylation occurs at Asn701. Intrachain disulfides connect Cys711–Cys716, Cys729–Cys792, Cys756–Cys796, Cys767–Cys780, Cys800–Cys842, Cys811–Cys815, and Cys852–Cys858. N-linked (GlcNAc...) asparagine glycosylation occurs at Asn739. A glycan (N-linked (GlcNAc...) asparagine) is linked at Asn996. 6 cysteine pairs are disulfide-bonded: Cys1000–Cys1056, Cys1022–Cys1060, Cys1033–Cys1046, Cys1064–Cys1101, Cys1075–Cys1079, and Cys1118–Cys1122. N-linked (GlcNAc...) asparagine glycosylation is present at Asn1071. N-linked (GlcNAc...) asparagine glycosylation is present at Asn1212. A disulfide bridge links Cys1240 with Cys1246. A glycan (N-linked (GlcNAc...) asparagine) is linked at Asn1252. 12 cysteine pairs are disulfide-bonded: Cys1259/Cys1306, Cys1267/Cys1310, Cys1278/Cys1291, Cys1314/Cys1352, Cys1325/Cys1329, Cys1362/Cys1367, Cys1378/Cys1434, Cys1385/Cys1438, Cys1396/Cys1415, Cys1442/Cys1486, Cys1453/Cys1457, and Cys1496/Cys1501. The N-linked (GlcNAc...) asparagine glycan is linked to Asn1303. The N-linked (GlcNAc...) asparagine glycan is linked to Asn1393. The N-linked (GlcNAc...) asparagine glycan is linked to Asn1527. The chain crosses the membrane as a helical span at residues Val1636–Leu1656. Topologically, residues Ala1657–Met1686 are cytoplasmic.

Extensively N-glycosylated.

It is found in the cell membrane. The protein localises to the cell projection. Functionally, required for normal sprouting angiogenesis and normal embryonic development of intersegmental vessels (ISV). Required for normal function of the glomerular filtration barrier. Required for normal axon outgrowth on embryonic motor neurons at the level of the horizontal myoseptum. Required for normal expression of notch1b, suggesting that its functions in angiogenesis and neuron outgrowth are due to decreased expression of notch1b. Plays a role in actin cytoskeleton rearrangement. The protein is Thrombospondin type-1 domain-containing protein 7A of Danio rerio (Zebrafish).